Consider the following 241-residue polypeptide: uncharacterized protein (241 aa).

Residues 22–78 form the Cupin type-2 domain; that stretch reads SHKHAYSQFLFPLEGSIDLETEGRQVKLNPDHFLYIPPQCEHRFRSIGRNECLVLDV. The region spanning 137-235 is the HTH araC/xylS-type domain; sequence YASIAYIHSH…GMPPRLYRNT (99 aa). 2 DNA-binding regions (H-T-H motif) span residues 154 to 175 and 202 to 225; these read KKLA…KKQT and LTVV…TKST.

This is an uncharacterized protein from Bacillus subtilis (strain 168).